We begin with the raw amino-acid sequence, 541 residues long: Atlastin-3 (541 aa).

The disordered stretch occupies residues 1–22 (MLSPQRTAAVASRGAGDAMENG). Positions 1-25 (MLSPQRTAAVASRGAGDAMENGKPG) are N-terminal hypervariable region (HVR). Over 1–445 (MLSPQRTAAV…NVFSTFRTPA (445 aa)) the chain is Cytoplasmic. The GB1/RHD3-type G domain maps to 57-306 (DLDVVVVSVA…LIPYVLNPSK (250 aa)). 7 residues coordinate GDP: R70, K71, G72, K73, S74, F75, and R109. D142 is a binding site for Mg(2+). GDP-binding residues include R213, D214, V272, and S275. The interval 344–434 (MLQATAANNL…YENFCKHNGS (91 aa)) is 3HB (three-helix bundle) domain. The residue at position 391 (K391) is an N6-acetyllysine. Residues 446–466 (VLFTGIAVLYIASGLTGFIGL) form a helical membrane-spanning segment. Residue E467 is a topological domain, lumenal. A helical membrane pass occupies residues 468 to 488 (VVAQLFNCMVGLLLIALLTWG). Residues 489–541 (YIRYSGQYLELGGAIDSGAAYVLEQASSHIGNSTQAAVRDAIAGRPPADKKSQ) lie on the Cytoplasmic side of the membrane.

This sequence belongs to the TRAFAC class dynamin-like GTPase superfamily. GB1/RHD3 GTPase family. GB1 subfamily. Monomeric and homodimeric. The homodimer, transiently formed by two molecules on opposing membranes, is the active form mediating ER membrane fusion. Interacts with ZFYVE27; both proteins are involved in endoplasmic reticulum tubular network organization. Interacts with REEP5; both proteins are involved in endoplasmic reticulum tubular network organization.

The protein localises to the endoplasmic reticulum membrane. It catalyses the reaction GTP + H2O = GDP + phosphate + H(+). Its function is as follows. Atlastin-3 (ATL3) is a membrane-anchored GTPase that mediates the GTP-dependent fusion of endoplasmic reticulum (ER) membranes, maintaining the continuous ER network. It facilitates the formation of three-way junctions where ER tubules intersect. Two atlastin-3 on neighboring ER tubules bind GTP and form loose homodimers through the GB1/RHD3-type G domains and 3HB regions. Upon GTP hydrolysis, the 3HB regions tighten, pulling the membranes together to drive their fusion. After fusion, the homodimer disassembles upon release of inorganic phosphate (Pi). Subsequently, GDP dissociates, resetting the monomers to a conformation ready for a new fusion cycle. This chain is Atlastin-3, found in Rattus norvegicus (Rat).